A 706-amino-acid chain; its full sequence is Gamma-adducin (706 aa).

Positions 1-10 (MSSDASQGVI) are enriched in polar residues. The segment at 1-20 (MSSDASQGVITTPPPPSMPH) is disordered. Ser2 carries the post-translational modification N-acetylserine. A phosphoserine mark is found at Ser42, Ser64, Ser402, Ser414, Ser423, Ser442, and Ser461. 4 disordered regions span residues 471-497 (AEDS…LNTN), 535-555 (PSTM…NPFS), 575-610 (GLED…KLEE), and 666-706 (EKIE…KVEA). A Glycyl lysine isopeptide (Lys-Gly) (interchain with G-Cter in SUMO2) cross-link involves residue Lys484. 7 positions are modified to phosphoserine: Ser585, Ser590, Ser673, Ser677, Ser679, Ser681, and Ser683. The segment covering 589-602 (SSVSQIQSQTQSPQ) has biased composition (low complexity). Residues 682-706 (PSKKKKKFRTPSFLKKNKKKEKVEA) are compositionally biased toward basic residues. The interaction with calmodulin stretch occupies residues 684-701 (KKKKKFRTPSFLKKNKKK).

Belongs to the aldolase class II family. Adducin subfamily. Heterodimer of an alpha and a gamma subunit. In terms of processing, sumoylated. Post-translationally, proteolytically cleaved by asparagine endopeptidase (AEP) into 2 fragments. Overexpression of the 1-357 fragment induces neuronal apoptosis, and overexpression of either 1-357 or 358-706 fragment increases the degeneration of dendritic spines. Overexpression of the 1-357 fragment impairs neurite outgrowth by downregulating the expression of Rac2, and induces synaptic dysfunction and cognitive impairments in tau P301S transgenic mice, a mouse model for Alzheimer disease (AD). As to expression, ubiquitously expressed. Cleavage fragment 1-357 is abundantly expressed in the brain of patients with Alzheimer disease (AD), but hardly detectable in age-matched control individuals (at protein level).

It is found in the cytoplasm. Its subcellular location is the cytoskeleton. The protein localises to the cell membrane. In terms of biological role, membrane-cytoskeleton-associated protein that promotes the assembly of the spectrin-actin network. Plays a role in actin filament capping. Binds to calmodulin. Involved in myogenic reactivity of the renal afferent arteriole (Af-art), renal interlobular arteries and middle cerebral artery (MCA) to increased perfusion pressure. Involved in regulation of potassium channels in the vascular smooth muscle cells (VSMCs) of the Af-art and MCA ex vivo. Involved in regulation of glomerular capillary pressure, glomerular filtration rate (GFR) and glomerular nephrin expression in response to hypertension. Involved in renal blood flow (RBF) autoregulation. Plays a role in podocyte structure and function. Regulates globular monomer actin (G-actin) and filamentous polymer actin (F-actin) ratios in the primary podocytes affecting actin cytoskeleton organization. Regulates expression of synaptopodin, RhoA, Rac1 and CDC42 in the renal cortex and the primary podocytes. Regulates expression of nephrin in the glomeruli and in the primary podocytes, expression of nephrin and podocinin in the renal cortex, and expression of focal adhesion proteins integrin alpha-3 and integrin beta-1 in the glomeruli. Involved in cell migration and cell adhesion of podocytes, and in podocyte foot process effacement. Regulates expression of profibrotics markers MMP2, MMP9, TGF beta-1, tubular tight junction protein E-cadherin, and mesenchymal markers vimentin and alpha-SMA. Promotes the growth of neurites. This Homo sapiens (Human) protein is Gamma-adducin (ADD3).